Consider the following 124-residue polypeptide: Small ribosomal subunit protein uS12c (124 aa).

Residues 105–124 (AGVKDRRQSRSKYGAKRPKA) form a disordered region. The span at 113-124 (SRSKYGAKRPKA) shows a compositional bias: basic residues.

Belongs to the universal ribosomal protein uS12 family. As to quaternary structure, part of the 30S ribosomal subunit.

Its subcellular location is the plastid. It is found in the cyanelle. Functionally, with S4 and S5 plays an important role in translational accuracy. Located at the interface of the 30S and 50S subunits. In Cyanophora paradoxa, this protein is Small ribosomal subunit protein uS12c (rps12).